The following is a 1024-amino-acid chain: Beta-galactosidase (1024 aa).

Asn-103 and Asp-202 together coordinate substrate. Asp-202 is a binding site for Na(+). Residues Glu-417, His-419, and Glu-462 each coordinate Mg(2+). Residues Glu-462 and 538 to 541 (EYAH) contribute to the substrate site. Catalysis depends on Glu-462, which acts as the Proton donor. Glu-538 acts as the Nucleophile in catalysis. Asn-598 contacts Mg(2+). Phe-602 and Asn-605 together coordinate Na(+). Positions 605 and 1000 each coordinate substrate.

It belongs to the glycosyl hydrolase 2 family. In terms of assembly, homotetramer. Mg(2+) serves as cofactor. It depends on Na(+) as a cofactor.

It carries out the reaction Hydrolysis of terminal non-reducing beta-D-galactose residues in beta-D-galactosides.. The polypeptide is Beta-galactosidase (Escherichia coli (strain ATCC 8739 / DSM 1576 / NBRC 3972 / NCIMB 8545 / WDCM 00012 / Crooks)).